A 261-amino-acid polypeptide reads, in one-letter code: Glucose 1-dehydrogenase (261 aa).

11–35 (AITGAASGLGKAMAIRFGKEQAKVV) serves as a coordination point for NADP(+). Substrate is bound at residue Ser-145. Residue Tyr-158 is the Proton acceptor of the active site.

Belongs to the short-chain dehydrogenases/reductases (SDR) family. As to quaternary structure, homotetramer.

The catalysed reaction is D-glucose + NAD(+) = D-glucono-1,5-lactone + NADH + H(+). It carries out the reaction D-glucose + NADP(+) = D-glucono-1,5-lactone + NADPH + H(+). The protein is Glucose 1-dehydrogenase (gdh) of Bacillus subtilis (strain 168).